The following is a 163-amino-acid chain: Putative H/ACA ribonucleoprotein complex subunit 2-like protein (163 aa).

Belongs to the eukaryotic ribosomal protein eL8 family. Component of the small nucleolar ribonucleoprotein particle containing H/ACA-type snoRNAs (H/ACA snoRNPs).

Its subcellular location is the nucleus. The protein resides in the nucleolus. Required for ribosome biogenesis. Part of a complex which catalyzes pseudouridylation of rRNA. This involves the isomerization of uridine such that the ribose is subsequently attached to C5, instead of the normal N1. Pseudouridine ('psi') residues may serve to stabilize the conformation of rRNAs. This is Putative H/ACA ribonucleoprotein complex subunit 2-like protein from Caenorhabditis briggsae.